The chain runs to 367 residues: DNA replication and repair protein RecF (367 aa).

31-38 (GENGSGKT) contacts ATP.

The protein belongs to the RecF family.

The protein resides in the cytoplasm. Functionally, the RecF protein is involved in DNA metabolism; it is required for DNA replication and normal SOS inducibility. RecF binds preferentially to single-stranded, linear DNA. It also seems to bind ATP. The protein is DNA replication and repair protein RecF of Saccharophagus degradans (strain 2-40 / ATCC 43961 / DSM 17024).